The sequence spans 1009 residues: Delphilin (1009 aa).

5 disordered regions span residues 28–82 (CRSK…SNTM), 170–193 (EGPVDYPQSDSEPEETPSAPRSRS), 322–369 (ASPD…SRDT), 414–635 (ELSS…SDNN), and 990–1009 (SETQGTENPKSPRIASPLAW). Positions 44–53 (RSQDHHERPQ) are enriched in basic and acidic residues. The region spanning 95-172 (TIRVYRGKKS…MPSLVVEEGP (78 aa)) is the PDZ domain. Over residues 322-332 (ASPDSVDSNPY) the composition is skewed to polar residues. Composition is skewed to low complexity over residues 334–352 (SLDSPPASPLPSDELSPLP) and 427–439 (DDSTSVSYSSGSD). Pro residues-rich tracts occupy residues 441 to 455 (IPPPPQSPPPPPPPL), 462 to 477 (SPLPITPEHLPQPPPA), and 484 to 493 (IAPPPPPPRP). The segment covering 521-535 (SSPQPSSQPILQLHQ) has biased composition (low complexity). The span at 557 to 602 (AQHTRLQHPSQSIYQSQQTTVPRTSPSLTKQKSLHSQPSQQSFEGT) shows a compositional bias: polar residues. Residues 607-628 (VPPPPPPPLPPPCDPPPLPKPS) are compositionally biased toward pro residues. An FH2 domain is found at 629–1009 (PKASDNNHMS…SPRIASPLAW (381 aa)).

Its subcellular location is the postsynaptic cell membrane. Its function is as follows. Postsynaptic scaffolding protein. This chain is Delphilin (grid2ip), found in Danio rerio (Zebrafish).